The primary structure comprises 773 residues: Immunoglobulin domain and leucine-rich repeat-containing protein 2 (773 aa).

The first 20 residues, 1-20, serve as a signal peptide directing secretion; that stretch reads MRKFVFFVVAILIQIHTTTS. The Extracellular portion of the chain corresponds to 21 to 493; that stretch reads QRNRSSSPSG…DWYSYDVFNS (473 aa). LRR repeat units follow at residues 52 to 73, 74 to 96, 97 to 120, 122 to 144, 145 to 167, and 168 to 191; these read TRNI…KIYG, SNIQ…IFAP, FPQL…VIHP, LKVL…LLSI, FPKI…DTSN, and TKLK…TLRV. Asn-114 carries N-linked (GlcNAc...) asparagine glycosylation. A glycan (N-linked (GlcNAc...) asparagine) is linked at Asn-204. 4 LRR repeats span residues 206–230, 233–251, 252–275, and 296–319; these read STKL…DWKF, LRSL…QLDA, PLLN…ILTP, and PSTV…FIPM. The Ig-like domain occupies 349 to 479; it reads PVYAQTSIRK…GKDYGIYHFR (131 aa). 2 N-linked (GlcNAc...) asparagine glycosylation sites follow: Asn-361 and Asn-379. A disulfide bridge links Cys-396 with Cys-463. Residues 494 to 514 form a helical membrane-spanning segment; sequence VFWGGLATSLIVCLISFLLNI. The Cytoplasmic segment spans residues 515 to 773; it reads TWILTRKSAL…RSPDSPPEKR (259 aa). Residues 725–773 are disordered; sequence VRPGIIPTNAPSIRFTTKPTTSSISNEASTSSPSSSGAHRSPDSPPEKR. Positions 733–745 are enriched in polar residues; that stretch reads NAPSIRFTTKPTT. Over residues 746-763 the composition is skewed to low complexity; the sequence is SSISNEASTSSPSSSGAH. The segment covering 764–773 has biased composition (basic and acidic residues); it reads RSPDSPPEKR.

It localises to the membrane. This is Immunoglobulin domain and leucine-rich repeat-containing protein 2 from Caenorhabditis elegans.